The following is a 174-amino-acid chain: Mytilin-3 (174 aa).

Residues 1–16 (MLKGIILIVTIQLVNA) form the signal peptide.

As to expression, component of the organic matrix of calcified shell layers like nacre and prisms.

The protein localises to the secreted. The chain is Mytilin-3 from Mytilus californianus (California mussel).